The sequence spans 238 residues: Ribonuclease PH (238 aa).

Phosphate-binding positions include Arg-86 and 124-126 (GTR).

Belongs to the RNase PH family. Homohexameric ring arranged as a trimer of dimers.

The enzyme catalyses tRNA(n+1) + phosphate = tRNA(n) + a ribonucleoside 5'-diphosphate. Its function is as follows. Phosphorolytic 3'-5' exoribonuclease that plays an important role in tRNA 3'-end maturation. Removes nucleotide residues following the 3'-CCA terminus of tRNAs; can also add nucleotides to the ends of RNA molecules by using nucleoside diphosphates as substrates, but this may not be physiologically important. Probably plays a role in initiation of 16S rRNA degradation (leading to ribosome degradation) during starvation. This chain is Ribonuclease PH, found in Escherichia coli O6:K15:H31 (strain 536 / UPEC).